A 119-amino-acid chain; its full sequence is MKKSYRVKREKDFQAIFKLGQSMANRKFVIYHLKGEHKHFRAGISVGKKLGNAVTRNAVKRKIRHVLMELGDHLKTEDFVVIARRGAEELDYQAVKQNLHHVLKLAKLLEEGFEIEKKS.

The protein belongs to the RnpA family. As to quaternary structure, consists of a catalytic RNA component (M1 or rnpB) and a protein subunit.

The enzyme catalyses Endonucleolytic cleavage of RNA, removing 5'-extranucleotides from tRNA precursor.. RNaseP catalyzes the removal of the 5'-leader sequence from pre-tRNA to produce the mature 5'-terminus. It can also cleave other RNA substrates such as 4.5S RNA. The protein component plays an auxiliary but essential role in vivo by binding to the 5'-leader sequence and broadening the substrate specificity of the ribozyme. This chain is Ribonuclease P protein component, found in Streptococcus equi subsp. zooepidemicus (strain MGCS10565).